Reading from the N-terminus, the 214-residue chain is C-type lectin domain family 4 member E (214 aa).

Topologically, residues 1-22 (MNSTKSPASHHTERGCFKNSQV) are cytoplasmic. A helical; Signal-anchor for type II membrane protein membrane pass occupies residues 23-45 (LSWTIAGASILFLSGCFITRCVV). Topologically, residues 46–214 (TYRSSQISGQ…CEMPEISPLD (169 aa)) are extracellular. A disulfide bridge links Cys-80 with Cys-91. The region spanning 87-206 (YQSSCYFFST…CFYSMPWICE (120 aa)) is the C-type lectin domain. N-linked (GlcNAc...) asparagine glycosylation occurs at Asn-107. 2 disulfide bridges follow: Cys-108–Cys-205 and Cys-179–Cys-197. 7 residues coordinate Ca(2+): Val-117, Glu-123, Glu-169, Asn-171, Asn-193, Asp-194, and Glu-206. The short motif at 169–171 (EPN) is the Confers specificity for glucose/mannose-type carbohydrates element.

In terms of assembly, monomer and homodimer. Interacts with signaling adapter Fc receptor gamma chain/FCER1G to form a functional complex; the interaction is direct. Alternatively, acts as a bridge for interaction between CLEC4D and FCER1G. A heterodimer of CLEC4E and CLEC4D associates with FCER1G to form a functional complex. Interacts with SAP130 nuclear protein that is released from necrotic cells; the interaction is direct. Highly expressed in macrophages in response to stimulation with bacterial glycolipids and pro-inflammatory cytokines. Expressed in dendritic cells (at protein level) in response to stimulation with mycobacterial trehalose 6,6'-dimycolate (TDM).

It localises to the cell membrane. Its subcellular location is the cell projection. The protein resides in the phagocytic cup. Functionally, calcium-dependent lectin that acts as a pattern recognition receptor (PRR) of the innate immune system: recognizes damage-associated molecular patterns (DAMPs) of abnormal self and pathogen-associated molecular patterns (PAMPs) of bacteria and fungi. The PAMPs notably include mycobacterial trehalose 6,6'-dimycolate (TDM), a cell wall glycolipid with potent adjuvant immunomodulatory functions. Interacts with signaling adapter Fc receptor gamma chain/FCER1G to form a functional complex in myeloid cells. Binding of mycobacterial trehalose 6,6'-dimycolate (TDM) to this receptor complex leads to phosphorylation of the immunoreceptor tyrosine-based activation motif (ITAM) of FCER1G, triggering activation of SYK, CARD9 and NF-kappa-B, consequently driving maturation of antigen-presenting cells and shaping antigen-specific priming of T-cells toward effector T-helper 1 (Th1) and T-helper 17 (Th17) cell subtypes. Also recognizes alpha-mannose residues on pathogenic fungi of the genus Malassezia and mediates macrophage activation. Through recognition of DAMPs released upon nonhomeostatic cell death, enables immune sensing of damaged self and promotes inflammatory cell infiltration into the damaged tissue. The polypeptide is C-type lectin domain family 4 member E (Mus musculus (Mouse)).